A 147-amino-acid chain; its full sequence is Hemoglobin subunit epsilon (147 aa).

In terms of domain architecture, Globin spans 3–147; the sequence is HFTAEEKAII…VATALAHKYH (145 aa). Phosphoserine is present on residues S14 and S51. Residues H64 and H93 each coordinate heme b.

Belongs to the globin family. In terms of assembly, heterotetramer of two alpha chains and two epsilon chains in early embryonic hemoglobin Gower-2; two zeta chains and two epsilon chains in early embryonic hemoglobin Gower-1. As to expression, red blood cells.

In terms of biological role, the epsilon chain is a beta-type chain of early mammalian embryonic hemoglobin. The sequence is that of Hemoglobin subunit epsilon (HBE1) from Otolemur crassicaudatus (Brown greater galago).